Reading from the N-terminus, the 464-residue chain is UDP-N-acetylmuramate--L-alanine ligase (464 aa).

112-118 is an ATP binding site; it reads GTHGKTT.

Belongs to the MurCDEF family.

Its subcellular location is the cytoplasm. The catalysed reaction is UDP-N-acetyl-alpha-D-muramate + L-alanine + ATP = UDP-N-acetyl-alpha-D-muramoyl-L-alanine + ADP + phosphate + H(+). It participates in cell wall biogenesis; peptidoglycan biosynthesis. Its function is as follows. Cell wall formation. This is UDP-N-acetylmuramate--L-alanine ligase from Acidithiobacillus ferrooxidans (strain ATCC 23270 / DSM 14882 / CIP 104768 / NCIMB 8455) (Ferrobacillus ferrooxidans (strain ATCC 23270)).